A 150-amino-acid chain; its full sequence is UPF0506 protein SJCHGC02381 (150 aa).

The first 18 residues, 1-18 (MNTCIQLLILCLVTVINS), serve as a signal peptide directing secretion. N-linked (GlcNAc...) asparagine glycosylation is found at Asn-20, Asn-24, Asn-32, Asn-36, Asn-48, Asn-52, Asn-64, and Asn-110. The disordered stretch occupies residues 22–49 (TDNSTENTIKNETENATETELPETFENE). Positions 36 to 49 (NATETELPETFENE) are enriched in acidic residues. 3 disulfide bridges follow: Cys-116-Cys-130, Cys-123-Cys-134, and Cys-129-Cys-139.

Belongs to the UPF0506 family.

Its subcellular location is the secreted. The sequence is that of UPF0506 protein SJCHGC02381 from Schistosoma japonicum (Blood fluke).